Reading from the N-terminus, the 275-residue chain is Formamidopyrimidine-DNA glycosylase (275 aa).

Proline 2 acts as the Schiff-base intermediate with DNA in catalysis. The active-site Proton donor is the glutamate 3. Lysine 58 serves as the catalytic Proton donor; for beta-elimination activity. The DNA site is built by histidine 93, arginine 111, and arginine 156. The segment at 241–275 (FVYDRAGQPCRVCGTPVRQIVQGQRSTYFCPTCQR) adopts an FPG-type zinc-finger fold. Arginine 265 serves as the catalytic Proton donor; for delta-elimination activity.

This sequence belongs to the FPG family. As to quaternary structure, monomer. The cofactor is Zn(2+).

It carries out the reaction Hydrolysis of DNA containing ring-opened 7-methylguanine residues, releasing 2,6-diamino-4-hydroxy-5-(N-methyl)formamidopyrimidine.. The catalysed reaction is 2'-deoxyribonucleotide-(2'-deoxyribose 5'-phosphate)-2'-deoxyribonucleotide-DNA = a 3'-end 2'-deoxyribonucleotide-(2,3-dehydro-2,3-deoxyribose 5'-phosphate)-DNA + a 5'-end 5'-phospho-2'-deoxyribonucleoside-DNA + H(+). Involved in base excision repair of DNA damaged by oxidation or by mutagenic agents. Acts as a DNA glycosylase that recognizes and removes damaged bases. Has a preference for oxidized purines, such as 7,8-dihydro-8-oxoguanine (8-oxoG). Has AP (apurinic/apyrimidinic) lyase activity and introduces nicks in the DNA strand. Cleaves the DNA backbone by beta-delta elimination to generate a single-strand break at the site of the removed base with both 3'- and 5'-phosphates. The protein is Formamidopyrimidine-DNA glycosylase of Burkholderia cenocepacia (strain HI2424).